The chain runs to 754 residues: 5-methyltetrahydropteroyltriglutamate--homocysteine methyltransferase (754 aa).

Residues 17 to 20 (RELK) and lysine 117 each bind 5-methyltetrahydropteroyltri-L-glutamate. L-homocysteine is bound by residues 431–433 (IGS) and glutamate 484. L-methionine-binding positions include 431-433 (IGS) and glutamate 484. 5-methyltetrahydropteroyltri-L-glutamate contacts are provided by residues 515–516 (RC) and tryptophan 561. L-homocysteine is bound at residue aspartate 599. Aspartate 599 is an L-methionine binding site. Glutamate 605 contributes to the 5-methyltetrahydropteroyltri-L-glutamate binding site. The Zn(2+) site is built by histidine 641, cysteine 643, and glutamate 665. Histidine 694 functions as the Proton donor in the catalytic mechanism. Cysteine 726 contributes to the Zn(2+) binding site.

This sequence belongs to the vitamin-B12 independent methionine synthase family. The cofactor is Zn(2+).

The catalysed reaction is 5-methyltetrahydropteroyltri-L-glutamate + L-homocysteine = tetrahydropteroyltri-L-glutamate + L-methionine. It functions in the pathway amino-acid biosynthesis; L-methionine biosynthesis via de novo pathway; L-methionine from L-homocysteine (MetE route): step 1/1. In terms of biological role, catalyzes the transfer of a methyl group from 5-methyltetrahydrofolate to homocysteine resulting in methionine formation. The protein is 5-methyltetrahydropteroyltriglutamate--homocysteine methyltransferase of Salmonella typhi.